We begin with the raw amino-acid sequence, 831 residues long: uncharacterized protein (831 aa).

Residues 1–146 (MDIFDSTITS…RAFSILSGVA (146 aa)) enclose the CID domain. Disordered regions lie at residues 205–233 (SSSSSSSSSSSSSSTTTTTTTTSELSSIS), 265–354 (KEHF…NYNN), 434–480 (IGNS…NEDS), and 572–831 (CGAD…SNRH). Low complexity-rich tracts occupy residues 272 to 354 (NDTS…NYNN) and 434 to 477 (IGNS…NNNN). 2 stretches are compositionally biased toward basic and acidic residues: residues 592 to 601 (NENKQNDSHR) and 611 to 813 (SRGE…RSKE). The segment covering 817 to 831 (NNDNRSSSNRSSNRH) has biased composition (low complexity).

This is an uncharacterized protein from Dictyostelium discoideum (Social amoeba).